The chain runs to 538 residues: NADH-quinone oxidoreductase subunit N (538 aa).

The next 14 membrane-spanning stretches (helical) occupy residues 12 to 32 (IAYG…VSVL), 47 to 67 (LALA…LSGS), 81 to 101 (PTLY…VVMA), 144 to 164 (GITQ…MMLF), 170 to 190 (LLTM…MCAL), 205 to 225 (YFLL…FVYG), 248 to 268 (FLLL…GAVP), 294 to 314 (IAAF…ITTD), 317 to 337 (PVLW…AVTQ), 343 to 363 (MLAY…AAAN), 371 to 391 (LFYL…AGLV), 423 to 443 (APVL…IPLT), 472 to 492 (SAIA…ADPV), and 502 to 522 (GPAV…LGVA).

Belongs to the complex I subunit 2 family. As to quaternary structure, NDH-1 is composed of 14 different subunits. Subunits NuoA, H, J, K, L, M, N constitute the membrane sector of the complex.

It localises to the cell membrane. The catalysed reaction is a quinone + NADH + 5 H(+)(in) = a quinol + NAD(+) + 4 H(+)(out). NDH-1 shuttles electrons from NADH, via FMN and iron-sulfur (Fe-S) centers, to quinones in the respiratory chain. The immediate electron acceptor for the enzyme in this species is believed to be a menaquinone. Couples the redox reaction to proton translocation (for every two electrons transferred, four hydrogen ions are translocated across the cytoplasmic membrane), and thus conserves the redox energy in a proton gradient. The protein is NADH-quinone oxidoreductase subunit N of Mycobacteroides abscessus (strain ATCC 19977 / DSM 44196 / CCUG 20993 / CIP 104536 / JCM 13569 / NCTC 13031 / TMC 1543 / L948) (Mycobacterium abscessus).